Here is a 948-residue protein sequence, read N- to C-terminus: Valine--tRNA ligase (948 aa).

The 'HIGH' region signature appears at 40 to 50 (PNVTGSLHMGH). The 'KMSKS' region motif lies at 551-555 (KMSKS). Lysine 554 contacts ATP. A coiled-coil region spans residues 879-945 (LIDKGAELAR…GKLAEQHARI (67 aa)).

It belongs to the class-I aminoacyl-tRNA synthetase family. ValS type 1 subfamily. As to quaternary structure, monomer.

It localises to the cytoplasm. It catalyses the reaction tRNA(Val) + L-valine + ATP = L-valyl-tRNA(Val) + AMP + diphosphate. Its function is as follows. Catalyzes the attachment of valine to tRNA(Val). As ValRS can inadvertently accommodate and process structurally similar amino acids such as threonine, to avoid such errors, it has a 'posttransfer' editing activity that hydrolyzes mischarged Thr-tRNA(Val) in a tRNA-dependent manner. The chain is Valine--tRNA ligase from Pseudomonas savastanoi pv. phaseolicola (strain 1448A / Race 6) (Pseudomonas syringae pv. phaseolicola (strain 1448A / Race 6)).